Consider the following 1475-residue polypeptide: Protein STU1 (1475 aa).

2 disordered regions span residues 870–913 (REST…EPDL) and 1113–1134 (DGES…NRPA). The span at 887 to 896 (DGAHGGDARD) shows a compositional bias: basic and acidic residues.

Belongs to the CLASP family. As to quaternary structure, interacts with microtubules.

It localises to the cytoplasm. It is found in the cytoskeleton. The protein resides in the nucleus. The protein localises to the spindle. Microtubule binding protein that promotes the stabilization of dynamic microtubules. Required for mitotic spindle formation. The sequence is that of Protein STU1 (STU1) from Eremothecium gossypii (strain ATCC 10895 / CBS 109.51 / FGSC 9923 / NRRL Y-1056) (Yeast).